Reading from the N-terminus, the 95-residue chain is Small ribosomal subunit protein bS18 (95 aa).

Belongs to the bacterial ribosomal protein bS18 family. Part of the 30S ribosomal subunit. Forms a tight heterodimer with protein bS6.

In terms of biological role, binds as a heterodimer with protein bS6 to the central domain of the 16S rRNA, where it helps stabilize the platform of the 30S subunit. This chain is Small ribosomal subunit protein bS18, found in Acidiphilium cryptum (strain JF-5).